Here is a 56-residue protein sequence, read N- to C-terminus: Large ribosomal subunit protein bL33 (56 aa).

The protein belongs to the bacterial ribosomal protein bL33 family.

The sequence is that of Large ribosomal subunit protein bL33 from Tropheryma whipplei (strain TW08/27) (Whipple's bacillus).